A 492-amino-acid chain; its full sequence is Adenosylhomocysteinase-like 2 (492 aa).

The segment at 43 to 64 (FTGSSDEEDVSPKDNHQRNSAG) is disordered. Substrate-binding residues include Asp192 and Glu217. An NAD(+)-binding site is contributed by 218–220 (SVT). Substrate is bound by residues Lys247 and Asp251. NAD(+) is bound by residues 283–288 (GDVGKG), Glu304, 360–362 (MGH), Asn407, Lys486, 486–490 (KANYY), and Tyr490.

Belongs to the adenosylhomocysteinase family. NAD(+) serves as cofactor.

Functionally, might play a role in the regulation of methionine metabolism. This is Adenosylhomocysteinase-like 2 from Drosophila melanogaster (Fruit fly).